Reading from the N-terminus, the 663-residue chain is 4-hydroxy-3-methylbut-2-en-1-yl diphosphate synthase (flavodoxin) (663 aa).

Residues cysteine 568, cysteine 571, cysteine 602, and glutamate 609 each coordinate [4Fe-4S] cluster.

It belongs to the IspG family. It depends on [4Fe-4S] cluster as a cofactor.

It carries out the reaction (2E)-4-hydroxy-3-methylbut-2-enyl diphosphate + oxidized [flavodoxin] + H2O + 2 H(+) = 2-C-methyl-D-erythritol 2,4-cyclic diphosphate + reduced [flavodoxin]. It participates in isoprenoid biosynthesis; isopentenyl diphosphate biosynthesis via DXP pathway; isopentenyl diphosphate from 1-deoxy-D-xylulose 5-phosphate: step 5/6. Functionally, converts 2C-methyl-D-erythritol 2,4-cyclodiphosphate (ME-2,4cPP) into 1-hydroxy-2-methyl-2-(E)-butenyl 4-diphosphate. The protein is 4-hydroxy-3-methylbut-2-en-1-yl diphosphate synthase (flavodoxin) of Leptospira interrogans serogroup Icterohaemorrhagiae serovar copenhageni (strain Fiocruz L1-130).